The following is a 541-amino-acid chain: Testis-specific chromodomain protein Y 2 (541 aa).

Residues 6 to 66 (FEVEAIVDKR…RQTEKQKKLT (61 aa)) enclose the Chromo domain. A disordered region spans residues 72–104 (RIFSNNARRRTSRSTKANYSKNSPKTPVTDKHH). The segment covering 87–97 (KANYSKNSPKT) has biased composition (polar residues).

In terms of tissue distribution, testis specific.

The protein resides in the nucleus. The enzyme catalyses L-lysyl-[protein] + acetyl-CoA = N(6)-acetyl-L-lysyl-[protein] + CoA + H(+). In terms of biological role, may have histone acetyltransferase activity. This is Testis-specific chromodomain protein Y 2 (CDY2A) from Homo sapiens (Human).